The following is a 370-amino-acid chain: DNA-directed RNA polymerase II subunit GRINL1A (370 aa).

Residues 1-20 (MSSLPRGFEPQTPEDLGQRS) are disordered. Positions 15-69 (DLGQRSLAELREMLKRQERLLRNVKFICKLPDKGKKISDAVTKLKAAIAEREEVR) form a coiled coil. The tract at residues 29–68 (KRQERLLRNVKFICKLPDKGKKISDAVTKLKAAIAEREEV) is important for transcription repressor activity. 3 disordered regions span residues 93–172 (DGDR…ASEG), 204–226 (DPTE…WSGP), and 241–283 (KNPM…RRDR). A compositionally biased stretch (polar residues) spans 101 to 131 (NSDQILDTSSPVPGCSSVANITSSQTTSRQQ). Residues 138 to 152 (RGGDAEAAEAEHTVS) show a composition bias toward basic and acidic residues. Low complexity predominate over residues 155 to 170 (PTSSSGAPAPSSSQAS). Residues 205–214 (PTEHHSEGNR) show a composition bias toward basic and acidic residues. Residues 228-299 (KKPHYMEVLE…TAARLLPLHH (72 aa)) are interaction with Pol II. Residues 254–266 (VLPSQPRDSSSAC) are compositionally biased toward polar residues. Phosphoserine is present on S271. The interval 300-315 (LPTQLLSIEESLALQR) is important for transcription repressor activity. Positions 303-328 (QLLSIEESLALQRQQKQSYEEIQAKL) form a coiled coil. Positions 316–341 (QQKQSYEEIQAKLAAQKLAERLNIKM) are interaction with Pol II. The tract at residues 340 to 370 (KMQSYNPEGESSRKYREVRDEDDDQSSEDEF) is disordered. A compositionally biased stretch (basic and acidic residues) spans 349–358 (ESSRKYREVR). Over residues 359-370 (DEDDDQSSEDEF) the composition is skewed to acidic residues.

It belongs to the GRINL1 family. As to quaternary structure, component of the Pol II(G) complex, which contains the RNA polymerase II (Pol II) core complex subunits and POLR2M and appears to be an abundant form of Pol II. Dephosphorylated at Ser-271 by the PNUTS-PP1 complex, promoting RNA polymerase II transcription pause-release.

The protein resides in the nucleus. In terms of biological role, appears to be a stable component of the Pol II(G) complex form of RNA polymerase II (Pol II). Pol II synthesizes mRNA precursors and many functional non-coding RNAs and is the central component of the basal RNA polymerase II transcription machinery. May play a role in Mediator complex-dependent regulation of transcription activation. Acts in vitro as a negative regulator of transcriptional activation; this repression is relieved by the Mediator complex, which restores Pol II(G) activator-dependent transcription to a level equivalent to that of Pol II. This chain is DNA-directed RNA polymerase II subunit GRINL1A (POLR2M), found in Bos taurus (Bovine).